Here is a 499-residue protein sequence, read N- to C-terminus: Cytochrome P450 11B1, mitochondrial (499 aa).

Residues 1-24 constitute a mitochondrion transit peptide; it reads MALRVTADVWLARPWQCLHRTRAL. Heme is bound at residue cysteine 446.

It belongs to the cytochrome P450 family. Heme is required as a cofactor. In terms of tissue distribution, adrenal zona fasciculata/reticularis.

It localises to the mitochondrion inner membrane. It carries out the reaction a steroid + 2 reduced [adrenodoxin] + O2 + 2 H(+) = an 11beta-hydroxysteroid + 2 oxidized [adrenodoxin] + H2O. The enzyme catalyses 21-hydroxyprogesterone + 2 reduced [adrenodoxin] + O2 + 2 H(+) = corticosterone + 2 oxidized [adrenodoxin] + H2O. The catalysed reaction is 21-hydroxyprogesterone + 2 reduced [adrenodoxin] + O2 + 2 H(+) = 18-hydroxy-11-deoxycorticosterone + 2 oxidized [adrenodoxin] + H2O. It catalyses the reaction 21-hydroxyprogesterone + 2 reduced [adrenodoxin] + O2 + 2 H(+) = 19-hydroxy-11-deoxycorticosterone + 2 oxidized [adrenodoxin] + H2O. It carries out the reaction 11-deoxycortisol + 2 reduced [adrenodoxin] + O2 + 2 H(+) = cortisol + 2 oxidized [adrenodoxin] + H2O. The enzyme catalyses cortisol + 2 reduced [adrenodoxin] + O2 + 2 H(+) = 18-hydroxycortisol + 2 oxidized [adrenodoxin] + H2O. The catalysed reaction is 11-deoxycortisol + 2 reduced [adrenodoxin] + O2 + 2 H(+) = 18-hydroxy-11-deoxycortisol + 2 oxidized [adrenodoxin] + H2O. Its pathway is steroid biosynthesis; glucocorticoid biosynthesis. The protein operates within steroid hormone biosynthesis. In terms of biological role, a cytochrome P450 monooxygenase involved in the biosynthesis of adrenal corticoids. Catalyzes a variety of reactions that are essential for many species, including detoxification, defense, and the formation of endogenous chemicals like steroid hormones. Steroid 11beta, 18- and 19-hydroxylase with preferred regioselectivity at 11beta, then 18, and lastly 19. Catalyzes the hydroxylation of 11-deoxycortisol and 11-deoxycorticosterone (21-hydroxyprogesterone) at 11beta position, yielding cortisol or corticosterone, respectively, but cannot produce aldosterone. Mechanistically, uses molecular oxygen inserting one oxygen atom into a substrate for hydroxylation and reducing the second into a water molecule. Two electrons are provided by NADPH via a two-protein mitochondrial transfer system comprising flavoprotein FDXR (adrenodoxin/ferredoxin reductase) and nonheme iron-sulfur protein FDX1 or FDX2 (adrenodoxin/ferredoxin). Due to its lack of 18-oxidation activity, it is incapable of generating aldosterone. Could also be involved in the androgen metabolic pathway. The polypeptide is Cytochrome P450 11B1, mitochondrial (Cyp11b1) (Rattus norvegicus (Rat)).